The chain runs to 519 residues: Sensory neuron membrane protein 2 (519 aa).

Residues 1 to 7 (MLAKHSK) are Cytoplasmic-facing. The helical transmembrane segment at 8 to 28 (LFFTGSVVFLIVAIVLASWGF) threads the bilayer. Topologically, residues 29-469 (PKIISTRIQK…DAHALLSYAQ (441 aa)) are extracellular. N-linked (GlcNAc...) asparagine glycans are attached at residues Asn-44, Asn-67, Asn-104, Asn-166, Asn-229, Asn-272, and Asn-314. Intrachain disulfides connect Cys-268-Cys-338, Cys-299-Cys-362, and Cys-340-Cys-351. A helical transmembrane segment spans residues 470–490 (LARWIILAAAIILAIIATITV). Residues 491–519 (ARSTSLISWPRNSNSVNFIIGPMVNDKMR) lie on the Cytoplasmic side of the membrane.

It belongs to the CD36 family. Localizes to both male and female antennae but not the leg, wing, gut, head or thoracic ganglia. Detected throughout the sensory epithelium, associating with both sex-pheromone sensilla and plant-volatile sensilla. Differentially expressed among different sensilla and different neurons within a given sensillum.

The protein localises to the cell membrane. Functionally, plays an olfactory role that is not restricted to pheromone sensitivity. This is Sensory neuron membrane protein 2 from Manduca sexta (Tobacco hawkmoth).